The following is a 321-amino-acid chain: Major immediate early protein (321 aa).

The RING-type zinc finger occupies 86–139 (CSVCLETYSQQSNDTCPFLIPTTCDHGFCFKCVINLQSNAMNIPHSTVCCPLCN). Residues 228 to 249 (LIEENTRLNEQIQELQHQVRTL) form a leucine-zipper region.

The protein localises to the host nucleus. In terms of biological role, plays some regulatory role in both viral DNA replication and transcriptional transactivation. This Lepidoptera (butterflies and moths) protein is Major immediate early protein (PE38).